A 258-amino-acid polypeptide reads, in one-letter code: Pimeloyl-[acyl-carrier protein] methyl ester esterase (258 aa).

Substrate-binding positions include tryptophan 22, 84–85, and 145–149; these read SL and FLAIQ. The active-site Nucleophile is serine 84. Catalysis depends on residues aspartate 209 and histidine 238. A substrate-binding site is contributed by histidine 238.

Belongs to the AB hydrolase superfamily. Carboxylesterase BioH family. Monomer.

Its subcellular location is the cytoplasm. The enzyme catalyses 6-carboxyhexanoyl-[ACP] methyl ester + H2O = 6-carboxyhexanoyl-[ACP] + methanol + H(+). It functions in the pathway cofactor biosynthesis; biotin biosynthesis. In terms of biological role, the physiological role of BioH is to remove the methyl group introduced by BioC when the pimeloyl moiety is complete. It allows to synthesize pimeloyl-ACP via the fatty acid synthetic pathway through the hydrolysis of the ester bonds of pimeloyl-ACP esters. The protein is Pimeloyl-[acyl-carrier protein] methyl ester esterase of Pseudoalteromonas atlantica (strain T6c / ATCC BAA-1087).